The chain runs to 1799 residues: Putative neural-cadherin 2 (1799 aa).

Residues asparagine 13, asparagine 64, asparagine 86, asparagine 118, asparagine 195, asparagine 260, asparagine 264, asparagine 283, and asparagine 377 are each glycosylated (N-linked (GlcNAc...) asparagine). Cadherin domains lie at aspartate 37 to phenylalanine 136, aspartate 137 to phenylalanine 252, proline 253 to phenylalanine 364, glutamate 368 to phenylalanine 485, aspartate 486 to phenylalanine 590, phenylalanine 590 to serine 709, and glycine 708 to methionine 812. Asparagine 601, asparagine 793, asparagine 910, asparagine 948, and asparagine 969 each carry an N-linked (GlcNAc...) asparagine glycan. Positions glutamine 973–glutamine 1010 constitute an EGF-like 1 domain. Disulfide bonds link cysteine 977–cysteine 988, cysteine 982–cysteine 997, cysteine 1000–cysteine 1009, cysteine 1191–cysteine 1217, cysteine 1224–cysteine 1239, cysteine 1233–cysteine 1248, and cysteine 1250–cysteine 1259. Residues glutamine 1011–cysteine 1217 enclose the Laminin G-like 1 domain. The EGF-like 2 domain occupies threonine 1220–asparagine 1260. The Laminin G-like 2 domain maps to threonine 1263–cysteine 1454. N-linked (GlcNAc...) asparagine glycans are attached at residues asparagine 1376 and asparagine 1437. 4 cysteine pairs are disulfide-bonded: cysteine 1419/cysteine 1454, cysteine 1501/cysteine 1512, cysteine 1506/cysteine 1523, and cysteine 1525/cysteine 1534. One can recognise an EGF-like 3; calcium-binding domain in the interval aspartate 1497–glutamate 1535. A helical membrane pass occupies residues alanine 1549–leucine 1569. A disordered region spans residues alanine 1726–leucine 1799. Composition is skewed to gly residues over residues aspartate 1733–proline 1744, leucine 1752–isoleucine 1763, and serine 1775–serine 1786.

The protein resides in the cell membrane. In terms of biological role, cadherins are calcium-dependent cell adhesion proteins. They preferentially interact with themselves in a homophilic manner in connecting cells. The chain is Putative neural-cadherin 2 (CadN2) from Drosophila melanogaster (Fruit fly).